Here is a 181-residue protein sequence, read N- to C-terminus: Large ribosomal subunit protein uL5 (181 aa).

The protein belongs to the universal ribosomal protein uL5 family. As to quaternary structure, part of the 50S ribosomal subunit; contacts the 5S rRNA and probably tRNA. Forms a bridge to the 30S subunit in the 70S ribosome.

Functionally, this is one of the proteins that bind and probably mediate the attachment of the 5S RNA into the large ribosomal subunit, where it forms part of the central protuberance. In the 70S ribosome it contacts protein S13 of the 30S subunit (bridge B1b), connecting the 2 subunits; this bridge is implicated in subunit movement. May contact the P site tRNA; the 5S rRNA and some of its associated proteins might help stabilize positioning of ribosome-bound tRNAs. The chain is Large ribosomal subunit protein uL5 from Methanococcus aeolicus (strain ATCC BAA-1280 / DSM 17508 / OCM 812 / Nankai-3).